The primary structure comprises 345 residues: Phosphoribosylformylglycinamidine cyclo-ligase (345 aa).

The protein belongs to the AIR synthase family.

It is found in the cytoplasm. The enzyme catalyses 2-formamido-N(1)-(5-O-phospho-beta-D-ribosyl)acetamidine + ATP = 5-amino-1-(5-phospho-beta-D-ribosyl)imidazole + ADP + phosphate + H(+). It functions in the pathway purine metabolism; IMP biosynthesis via de novo pathway; 5-amino-1-(5-phospho-D-ribosyl)imidazole from N(2)-formyl-N(1)-(5-phospho-D-ribosyl)glycinamide: step 2/2. The sequence is that of Phosphoribosylformylglycinamidine cyclo-ligase from Staphylococcus carnosus (strain TM300).